The following is a 273-amino-acid chain: 2,3,4,5-tetrahydropyridine-2,6-dicarboxylate N-succinyltransferase (273 aa).

Residues Arg104 and Asp141 each coordinate substrate.

It belongs to the transferase hexapeptide repeat family. In terms of assembly, homotrimer.

It is found in the cytoplasm. The enzyme catalyses (S)-2,3,4,5-tetrahydrodipicolinate + succinyl-CoA + H2O = (S)-2-succinylamino-6-oxoheptanedioate + CoA. Its pathway is amino-acid biosynthesis; L-lysine biosynthesis via DAP pathway; LL-2,6-diaminopimelate from (S)-tetrahydrodipicolinate (succinylase route): step 1/3. This Buchnera aphidicola subsp. Schizaphis graminum (strain Sg) protein is 2,3,4,5-tetrahydropyridine-2,6-dicarboxylate N-succinyltransferase.